We begin with the raw amino-acid sequence, 1255 residues long: Pre-mRNA-splicing factor ATP-dependent RNA helicase DEAH7 (1255 aa).

Residues 1–316 (MGVDPFKTTE…SDEDRSQGAE (316 aa)) form a disordered region. Residues 13-60 (EADKETNGGVPVKDKLTFKAPERKSRLGLDARAIEKKDNAKTEGEFKV) show a composition bias toward basic and acidic residues. Residues 109-137 (AQESTVTTENAGTSDISITPRTLSCTSSY) show a composition bias toward polar residues. Short sequence motifs (nuclear localization signal) lie at residues 144 to 153 (RHREEHRRDR) and 172 to 191 (RRRESYRQSDRDYHGEKRRR). The segment covering 144-219 (RHREEHRRDR…EWERSPHGDR (76 aa)) has biased composition (basic and acidic residues). Composition is skewed to low complexity over residues 220 to 240 (GSSYSRRPQPSPSPMLAAASP) and 271 to 290 (PIRASGSSIRSSSSRYGGRS). Residues 297–316 (REGDLTNEGHSDEDRSQGAE) are compositionally biased toward basic and acidic residues. In terms of domain architecture, Helicase ATP-binding spans 568–731 (LQVIRENQVI…FGSVPIFNIP (164 aa)). Position 581–588 (581–588 (GETGSGKT)) interacts with ATP. Residues 678-681 (DEAH) carry the DEAH box motif. Residues 753–933 (AVKQAMTIHI…NVVLLLKSLK (181 aa)) form the Helicase C-terminal domain. Over residues 1190–1224 (LEHKKKQKEEKSGMEEEMEKLRRDQVESELRSKER) the composition is skewed to basic and acidic residues. The interval 1190–1255 (LEHKKKQKEE…TFLRPKKLGL (66 aa)) is disordered.

Belongs to the DEAD box helicase family. DEAH subfamily. PRP16 sub-subfamily. As to quaternary structure, interacts with the Phytophthora PSR1 protein.

The protein localises to the nucleus. The enzyme catalyses ATP + H2O = ADP + phosphate + H(+). Its function is as follows. Involved in pre-mRNA splicing by mediating structural transitions of the spliceosome during the catalytic step. Facilitates expression of genes involved in auxin-mediated development including male-gametophyte transmission, apical-basal patterning of embryonic and gynoecium development, stamen development, phyllotactic flower positioning, and vascular development. Also involved in root-meristem maintenance and planar polarity of root-hair positioning. Acts as a component of RNA silencing that regulates distinct classes of endogenous small RNAs. Functions as a positive regulator of plant immunity. In Arabidopsis thaliana (Mouse-ear cress), this protein is Pre-mRNA-splicing factor ATP-dependent RNA helicase DEAH7.